The primary structure comprises 295 residues: Threonine/homoserine exporter RhtA (295 aa).

Over Met1–Pro9 the chain is Cytoplasmic. A helical transmembrane segment spans residues Val10–Leu30. An EamA 1 domain is found at Leu30–Leu135. The Periplasmic segment spans residues Ala31–Val38. The chain crosses the membrane as a helical span at residues Gly39–Phe59. Over Lys60–Arg71 the chain is Cytoplasmic. A helical membrane pass occupies residues Leu72–Ile92. Gln93 is a topological domain (periplasmic). A helical membrane pass occupies residues Thr94–Phe114. Over Ser115–Arg118 the chain is Cytoplasmic. A helical transmembrane segment spans residues Pro119–Gly139. At Gln140–Asp146 the chain is on the periplasmic side. A helical transmembrane segment spans residues Leu147–Gly167. Residues Cys159–Gly278 form the EamA 2 domain. The Cytoplasmic portion of the chain corresponds to Gln168–Gly175. The helical transmembrane segment at Pro176 to Leu196 threads the bilayer. Residues Gln197–Glu200 are Periplasmic-facing. Residues Ala201–Leu221 form a helical membrane-spanning segment. The Cytoplasmic segment spans residues Pro222 to Thr237. A helical transmembrane segment spans residues Phe238 to Gly258. The Periplasmic segment spans residues Glu259–Thr262. The chain crosses the membrane as a helical span at residues Pro263 to Val283. Topologically, residues Arg284–Asn295 are cytoplasmic.

The protein belongs to the drug/metabolite transporter (DMT) superfamily. 10 TMS drug/metabolite exporter (DME) (TC 2.A.7.3) family.

It is found in the cell inner membrane. Involved in the efflux of threonine and homoserine. The polypeptide is Threonine/homoserine exporter RhtA (rhtA) (Escherichia coli O157:H7).